The following is a 218-amino-acid chain: Adenylate kinase (218 aa).

ATP is bound at residue 10–15 (GAGKGT). Residues 30 to 59 (STGDMFRAAMADQTDLGVKAKAFIDKGELV) form an NMP region. AMP is bound by residues Thr31, Arg36, 57–59 (ELV), 85–88 (GFPR), and Gln92. Residues 126-164 (GRFICKTCGATYHKLYHPTQVEGTCDRCGGHVFFQREDD) form an LID region. Arg127 serves as a coordination point for ATP. Positions 130 and 133 each coordinate Zn(2+). 136 to 137 (TY) serves as a coordination point for ATP. Residues Cys150 and Cys153 each coordinate Zn(2+). Residues Arg161 and Arg172 each coordinate AMP. Gln200 provides a ligand contact to ATP.

This sequence belongs to the adenylate kinase family. Monomer.

The protein localises to the cytoplasm. It catalyses the reaction AMP + ATP = 2 ADP. The protein operates within purine metabolism; AMP biosynthesis via salvage pathway; AMP from ADP: step 1/1. Its function is as follows. Catalyzes the reversible transfer of the terminal phosphate group between ATP and AMP. Plays an important role in cellular energy homeostasis and in adenine nucleotide metabolism. The polypeptide is Adenylate kinase (Latilactobacillus sakei subsp. sakei (strain 23K) (Lactobacillus sakei subsp. sakei)).